A 152-amino-acid chain; its full sequence is Deoxyuridine 5'-triphosphate nucleotidohydrolase (152 aa).

Residues 71 to 73 (RSG), Asn-84, 88 to 90 (LID), and Met-98 contribute to the substrate site.

It belongs to the dUTPase family. The cofactor is Mg(2+).

It carries out the reaction dUTP + H2O = dUMP + diphosphate + H(+). Its pathway is pyrimidine metabolism; dUMP biosynthesis; dUMP from dCTP (dUTP route): step 2/2. This enzyme is involved in nucleotide metabolism: it produces dUMP, the immediate precursor of thymidine nucleotides and it decreases the intracellular concentration of dUTP so that uracil cannot be incorporated into DNA. This is Deoxyuridine 5'-triphosphate nucleotidohydrolase from Salmonella agona (strain SL483).